A 1719-amino-acid polypeptide reads, in one-letter code: Chromodomain-helicase-DNA-binding protein 1 (1719 aa).

Over residues 1–10 the composition is skewed to basic and acidic residues; it reads MNGHSDEESV. Residues 1-249 are disordered; it reads MNGHSDEESV…EAEETKTDSD (249 aa). The span at 34 to 62 shows a compositional bias: low complexity; sequence SSGSSSDGSSSQSGSSDSESGSESGSQSE. Residues 66 to 85 are compositionally biased toward basic and acidic residues; the sequence is DTSREKKQVQAKPPKADGSE. Low complexity predominate over residues 103-116; the sequence is KKQQQQQKAASSDS. The segment covering 117 to 133 has biased composition (acidic residues); it reads GSEEDSSSSEDSADDSS. Residues 149 to 160 show a composition bias toward low complexity; sequence SGSGSVSGTGSD. Residues 161–178 show a composition bias toward acidic residues; that stretch reads SESEEDGDKSSCEESESD. A compositionally biased stretch (basic residues) spans 184-207; the sequence is KVKSRKPPSRIKPKSGKKSTGQKK. A compositionally biased stretch (acidic residues) spans 212 to 222; the sequence is SSEEEEDDDED. The segment covering 239–248 has biased composition (basic and acidic residues); it reads KEAEETKTDS. 2 consecutive Chromo domains span residues 268-360 and 385-448; these read ETIE…RWLK and QIVE…TPFK. Positions 489–659 constitute a Helicase ATP-binding domain; it reads AHSWCKGNSC…WSLLHFIMPE (171 aa). 502-509 provides a ligand contact to ATP; that stretch reads DEMGLGKT. The short motif at 610–613 is the DEAH box element; it reads DEAH. In terms of domain architecture, Helicase C-terminal spans 788–939; sequence LLDKLLIRLR…HLVIQRMDTT (152 aa). 3 disordered regions span residues 1076 to 1116, 1319 to 1393, and 1503 to 1719; these read ISFN…TIPR, QRLA…TPVH, and KKRQ…SRKT. Composition is skewed to basic residues over residues 1103 to 1113 and 1327 to 1342; these read KRPKKRGRPRT and SKRRKTRNKKNKMKAS. Basic and acidic residues predominate over residues 1369–1380; the sequence is NKVNEIKSENKE. The segment at 1410–1512 is CHD1 helical C-terminal domain (CHCT); that stretch reads LDQKTFSVCK…KKRQESQQHN (103 aa). The span at 1511-1524 shows a compositional bias: polar residues; that stretch reads HNDQNISSNVNTHV. Basic and acidic residues-rich tracts occupy residues 1526 to 1576, 1585 to 1673, and 1698 to 1710; these read RNPD…DSRK, GKDH…DHRA, and SPFEHSSDHKSTP.

Belongs to the SNF2/RAD54 helicase family. In terms of assembly, component of the SAGA complex. Interacts with SSRP1.

It localises to the nucleus. It is found in the chromosome. The protein resides in the centromere. It catalyses the reaction ATP + H2O = ADP + phosphate + H(+). ATP-dependent chromatin-remodeling factor which functions as substrate recognition component of the transcription regulatory histone acetylation (HAT) complex SAGA. Regulates polymerase II transcription. Also required for efficient transcription by RNA polymerase I, and more specifically the polymerase I transcription termination step. Regulates negatively DNA replication. Not only involved in transcription-related chromatin remodeling, but also required to maintain a specific chromatin configuration across the genome. Required for maintaining open chromatin and pluripotency in embryonic stem cells. Required for centromeric localization of CENPA. The protein is Chromodomain-helicase-DNA-binding protein 1 (CHD1) of Gallus gallus (Chicken).